The chain runs to 330 residues: Aspartate--ammonia ligase (330 aa).

Belongs to the class-II aminoacyl-tRNA synthetase family. AsnA subfamily.

It is found in the cytoplasm. It carries out the reaction L-aspartate + NH4(+) + ATP = L-asparagine + AMP + diphosphate + H(+). Its pathway is amino-acid biosynthesis; L-asparagine biosynthesis; L-asparagine from L-aspartate (ammonia route): step 1/1. The polypeptide is Aspartate--ammonia ligase (Streptococcus agalactiae serotype III (strain NEM316)).